The sequence spans 272 residues: Methylesterase 8 (272 aa).

Ser102 acts as the Acyl-ester intermediate in catalysis. Catalysis depends on charge relay system residues Asp222 and His250.

This sequence belongs to the AB hydrolase superfamily. Methylesterase family.

In terms of biological role, methylesterase shown to have carboxylesterase activity in vitro. This Arabidopsis thaliana (Mouse-ear cress) protein is Methylesterase 8.